Here is a 276-residue protein sequence, read N- to C-terminus: 3-methyl-2-oxobutanoate hydroxymethyltransferase (276 aa).

Residues aspartate 46 and aspartate 85 each contribute to the Mg(2+) site. Residues 46 to 47, aspartate 85, and lysine 115 contribute to the 3-methyl-2-oxobutanoate site; that span reads DS. Glutamate 117 lines the Mg(2+) pocket. Glutamate 184 (proton acceptor) is an active-site residue.

It belongs to the PanB family. As to quaternary structure, homodecamer; pentamer of dimers. Requires Mg(2+) as cofactor.

It localises to the cytoplasm. It catalyses the reaction 3-methyl-2-oxobutanoate + (6R)-5,10-methylene-5,6,7,8-tetrahydrofolate + H2O = 2-dehydropantoate + (6S)-5,6,7,8-tetrahydrofolate. It functions in the pathway cofactor biosynthesis; (R)-pantothenate biosynthesis; (R)-pantoate from 3-methyl-2-oxobutanoate: step 1/2. In terms of biological role, catalyzes the reversible reaction in which hydroxymethyl group from 5,10-methylenetetrahydrofolate is transferred onto alpha-ketoisovalerate to form ketopantoate. The chain is 3-methyl-2-oxobutanoate hydroxymethyltransferase from Heliobacterium modesticaldum (strain ATCC 51547 / Ice1).